The sequence spans 308 residues: Elongation factor Ts (308 aa).

The involved in Mg(2+) ion dislocation from EF-Tu stretch occupies residues 80–83 (TDFV).

The protein belongs to the EF-Ts family.

It localises to the cytoplasm. Its function is as follows. Associates with the EF-Tu.GDP complex and induces the exchange of GDP to GTP. It remains bound to the aminoacyl-tRNA.EF-Tu.GTP complex up to the GTP hydrolysis stage on the ribosome. This chain is Elongation factor Ts, found in Parvibaculum lavamentivorans (strain DS-1 / DSM 13023 / NCIMB 13966).